A 311-amino-acid polypeptide reads, in one-letter code: Acetaldehyde dehydrogenase (311 aa).

Cysteine 131 serves as the catalytic Acyl-thioester intermediate. NAD(+) is bound by residues 162 to 170 and asparagine 273; that span reads SVGPGTRKN.

This sequence belongs to the acetaldehyde dehydrogenase family.

The catalysed reaction is acetaldehyde + NAD(+) + CoA = acetyl-CoA + NADH + H(+). The sequence is that of Acetaldehyde dehydrogenase from Ralstonia pickettii (strain 12J).